The sequence spans 391 residues: Yellow-related salivary protein ASP4 (391 aa).

Positions 1–18 (MKIFLCIIAVVSLQGVVA) are cleaved as a signal peptide. Residue N29 is glycosylated (N-linked (GlcNAc...) asparagine).

This sequence belongs to the major royal jelly protein family. In terms of tissue distribution, female salivary gland (at protein level).

Its subcellular location is the secreted. Its function is as follows. Probably modulates blood feeding of sand flies on vertebrate species by binding and sequestering different mediators involved in the host response. Binds biogenic amines. Binds serotonin and dopamine with high affinity. Binds adrenaline, octopamine and adrenaline with medium affinity. Binds histamine with low affinity. In Phlebotomus orientalis (Phlebotomine sand fly), this protein is Yellow-related salivary protein ASP4.